Here is a 141-residue protein sequence, read N- to C-terminus: Large ribosomal subunit protein uL22 (141 aa).

The protein belongs to the universal ribosomal protein uL22 family. As to quaternary structure, part of the 50S ribosomal subunit.

Its function is as follows. This protein binds specifically to 23S rRNA; its binding is stimulated by other ribosomal proteins, e.g. L4, L17, and L20. It is important during the early stages of 50S assembly. It makes multiple contacts with different domains of the 23S rRNA in the assembled 50S subunit and ribosome. Functionally, the globular domain of the protein is located near the polypeptide exit tunnel on the outside of the subunit, while an extended beta-hairpin is found that lines the wall of the exit tunnel in the center of the 70S ribosome. This chain is Large ribosomal subunit protein uL22, found in Frankia alni (strain DSM 45986 / CECT 9034 / ACN14a).